Here is a 218-residue protein sequence, read N- to C-terminus: Peptide methionine sulfoxide reductase A2 (218 aa).

Residues 1–19 (MDSSLKTQEPQVVETSPSP) show a composition bias toward polar residues. The tract at residues 1 to 30 (MDSSLKTQEPQVVETSPSPVAQEPPQVADK) is disordered. S205 is modified (phosphoserine).

The protein belongs to the MsrA Met sulfoxide reductase family.

It localises to the cytoplasm. It is found in the cytosol. It carries out the reaction L-methionyl-[protein] + [thioredoxin]-disulfide + H2O = L-methionyl-(S)-S-oxide-[protein] + [thioredoxin]-dithiol. The catalysed reaction is [thioredoxin]-disulfide + L-methionine + H2O = L-methionine (S)-S-oxide + [thioredoxin]-dithiol. Its activity is regulated as follows. Activated during dark in short day conditions. Catalyzes the reduction of methionine sulfoxide (MetSO) to methionine in proteins. Plays a protective role against oxidative stress by restoring activity to proteins that have been inactivated by methionine oxidation. Prevents cellular oxidative damage in long nights. MSRA family specifically reduces the MetSO S-enantiomer. The sequence is that of Peptide methionine sulfoxide reductase A2 (MRSA2) from Arabidopsis thaliana (Mouse-ear cress).